Consider the following 295-residue polypeptide: Protoheme IX farnesyltransferase (295 aa).

Transmembrane regions (helical) follow at residues 27–47 (IMYL…GNIH), 48–68 (PFIG…AGAI), 93–115 (IARS…VMMI), 119–136 (YLSG…SLVY), 147–167 (NIVI…TSVT), 175–195 (LILF…LSLL), 219–239 (IYIL…GIFL), 247–267 (TCAI…FVSI), and 275–295 (MFTY…ISSF).

Belongs to the UbiA prenyltransferase family. Protoheme IX farnesyltransferase subfamily.

It is found in the cell inner membrane. The catalysed reaction is heme b + (2E,6E)-farnesyl diphosphate + H2O = Fe(II)-heme o + diphosphate. It participates in porphyrin-containing compound metabolism; heme O biosynthesis; heme O from protoheme: step 1/1. Functionally, converts heme B (protoheme IX) to heme O by substitution of the vinyl group on carbon 2 of heme B porphyrin ring with a hydroxyethyl farnesyl side group. In Ehrlichia chaffeensis (strain ATCC CRL-10679 / Arkansas), this protein is Protoheme IX farnesyltransferase.